A 78-amino-acid polypeptide reads, in one-letter code: Small ribosomal subunit protein uS17 (78 aa).

It belongs to the universal ribosomal protein uS17 family. Part of the 30S ribosomal subunit.

One of the primary rRNA binding proteins, it binds specifically to the 5'-end of 16S ribosomal RNA. The chain is Small ribosomal subunit protein uS17 from Agrobacterium fabrum (strain C58 / ATCC 33970) (Agrobacterium tumefaciens (strain C58)).